A 464-amino-acid chain; its full sequence is MKLWGGRFTRTTDRLVEDFHSSISFDQRLYKEDIAGSIAHARMLAAVGLITPAEGEAIIKGLEEIRADIEAGRVTFDVGAEDIHMNIEKLLTERIGEAGKKLHTARSRNDQVALDLRLYLKEEIPAVKKLLAGLQQVLVDLAAQHLQTIMPGYTHLQKAQPVTLAHHLMAYFEMFYRDQQRLDDCLDRVDVMPLGAGALAGTTLPIDRELVARELGFKAISANSLDAVSDRDFVVEFLAAASLIMMHLSRLAEEVIFWSSEEFGFLELDDAYSTGSSMMPQKKNPDVAELVRGKTGRVYGHLMGMLAVLKGLPLAYNKDLQEDKEALFDTLDTVKGCLMVFTPMLATARFRVERMRADASRGFAAATDVAEYLVRKGLPFREAHAVVGSLVLHCLREGRSFQDLSLEEWQSFSPLFDNDIFGCLEAEACVNGRNLPGGPAPEAVGKAIERAREILAGIQAGLSR.

The protein belongs to the lyase 1 family. Argininosuccinate lyase subfamily.

The protein localises to the cytoplasm. The catalysed reaction is 2-(N(omega)-L-arginino)succinate = fumarate + L-arginine. It functions in the pathway amino-acid biosynthesis; L-arginine biosynthesis; L-arginine from L-ornithine and carbamoyl phosphate: step 3/3. The chain is Argininosuccinate lyase from Moorella thermoacetica (strain ATCC 39073 / JCM 9320).